Reading from the N-terminus, the 939-residue chain is Nonsense-mediated mRNA decay factor SMG8 (939 aa).

Disordered regions lie at residues 561–600 (KICT…QLSP) and 617–645 (LNES…ADTE). Residues 567–587 (GEDENEDGETEEADEDTEEKE) are compositionally biased toward acidic residues. Low complexity predominate over residues 617–629 (LNESQESSEQLSG).

Belongs to the SMG8 family.

Involved in nonsense-mediated decay (NMD) of mRNAs containing premature stop codons. Probable component of kinase complex containing nonC and recruited to stalled ribosomes. The chain is Nonsense-mediated mRNA decay factor SMG8 from Drosophila ananassae (Fruit fly).